The primary structure comprises 665 residues: Coiled-coil domain-containing protein 138 (665 aa).

Position 48 is a phosphothreonine (T48). At S49 the chain carries Phosphoserine. A coiled-coil region spans residues 198-323 (QQKFAEELQK…YEFMTIQRLK (126 aa)). S469 bears the Phosphoserine mark.

This chain is Coiled-coil domain-containing protein 138 (CCDC138), found in Homo sapiens (Human).